Here is a 2530-residue protein sequence, read N- to C-terminus: Agglutinin-like protein 2 (2530 aa).

An N-terminal signal peptide occupies residues 1–17 (MLLQFLLLSLCVSVATA). 4 cysteine pairs are disulfide-bonded: cysteine 73–cysteine 150, cysteine 96–cysteine 112, cysteine 205–cysteine 297, and cysteine 227–cysteine 256. Residues asparagine 253 and asparagine 315 are each glycosylated (N-linked (GlcNAc...) asparagine). 6 ALS repeats span residues 364–395 (TTIT…VDVP), 400–431 (TTVT…VQVP), 437–468 (VTTT…IREP), 473–504 (VTTT…IREP), 509–540 (VTTT…IREP), and 545–576 (VTTT…IREP). Asparagine 578 is a glycosylation site (N-linked (GlcNAc...) asparagine). The ALS 7 repeat unit spans residues 581-612 (VTTTEYWSQSYVTTSTITAPPGGTDTVIIREP). The N-linked (GlcNAc...) asparagine glycan is linked to asparagine 614. ALS repeat units lie at residues 617–648 (VTTT…IREP), 653–684 (VTTT…IREP), 689–720 (VTTT…IREP), 725–756 (VTTT…IREP), 761–792 (VTTT…IREP), 797–828 (VTTT…IREP), and 833–864 (VTTT…IREP). Asparagine 866 is a glycosylation site (N-linked (GlcNAc...) asparagine). 4 ALS repeats span residues 869–900 (VTTT…IREP), 905–936 (VTTT…IREP), 941–972 (VTTT…IREP), and 977–1008 (VTTT…IREP). Low complexity predominate over residues 954–967 (TTTVTGPPGGTDTV). Residues 954-975 (TTTVTGPPGGTDTVIIREPPNP) are disordered. N-linked (GlcNAc...) asparagine glycosylation is present at asparagine 1010. ALS repeat units lie at residues 1013–1044 (VTTT…IREP), 1049–1077 (VTTT…TVII), 1085–1116 (VTTT…IREP), and 1121–1152 (VTTT…IREP). A glycan (N-linked (GlcNAc...) asparagine) is linked at asparagine 1154. 6 ALS repeats span residues 1157–1188 (VTTT…IREP), 1193–1224 (VTTT…IREP), 1229–1260 (VTTT…IREP), 1265–1296 (VTTT…IREP), 1301–1332 (VTTT…IREP), and 1337–1368 (VTTT…IREP). Asparagine 1370 carries an N-linked (GlcNAc...) asparagine glycan. The stretch at 1373 to 1404 (VTTTEYWSQSYATTTTVTAPPGGTATVIIREP) is one ALS 29 repeat. An N-linked (GlcNAc...) asparagine glycan is attached at asparagine 1406. The ALS 30 repeat unit spans residues 1409 to 1440 (VTTTEYWSQSYATTTTITAPPGDTDTVIIREP). Residue asparagine 1442 is glycosylated (N-linked (GlcNAc...) asparagine). 2 ALS repeats span residues 1445–1476 (VTTT…IREP) and 1481–1512 (VTTT…IREP). Asparagine 1514 is a glycosylation site (N-linked (GlcNAc...) asparagine). The stretch at 1517–1548 (VTTTEYWSQSYATTTTVTAPPGGTATVIIREP) is one ALS 33 repeat. Asparagine 1550 is a glycosylation site (N-linked (GlcNAc...) asparagine). The ALS 34 repeat unit spans residues 1553–1584 (VTTTEYWSQSYATTTTITAPPGDTDTVIIREP). N-linked (GlcNAc...) asparagine glycosylation is present at asparagine 1586. The ALS 35 repeat unit spans residues 1589-1620 (VTTTEYWSQSYATTTTVTAPPGGTDTVIIREP). Asparagine 1622 carries N-linked (GlcNAc...) asparagine glycosylation. An ALS 36 repeat occupies 1625-1656 (VTTTEYWSQSYATTTTVTAPPGGTATVIIREP). N-linked (GlcNAc...) asparagine glycosylation is present at asparagine 1658. ALS repeat units follow at residues 1661-1692 (VTTT…IREP) and 1697-1728 (VTTT…IREP). Asparagine 1730 carries N-linked (GlcNAc...) asparagine glycosylation. Residues 1733 to 1764 (VTTTEYWSQSYATTTTVTAPPGGTDTVIIREP) form an ALS 39 repeat. A glycan (N-linked (GlcNAc...) asparagine) is linked at asparagine 1766. 2 ALS repeats span residues 1769–1800 (VTTT…IREP) and 1805–1836 (VTTT…IREP). Residue asparagine 1838 is glycosylated (N-linked (GlcNAc...) asparagine). 2 ALS repeats span residues 1841–1872 (VTTT…IREP) and 1877–1907 (VTTT…RIRE). A glycan (N-linked (GlcNAc...) asparagine) is linked at asparagine 1910. ALS repeat units lie at residues 1913 to 1944 (VTTT…IREP) and 1949 to 1980 (VTTT…IREP). The N-linked (GlcNAc...) asparagine glycan is linked to asparagine 1982. ALS repeat units lie at residues 1985–2016 (VTTT…IREP), 2021–2052 (VTTT…IREP), and 2057–2088 (VTTT…IREP). The N-linked (GlcNAc...) asparagine glycan is linked to asparagine 2090. ALS repeat units lie at residues 2093-2124 (VTTT…IREP) and 2129-2157 (VTTT…SVII). N-linked (GlcNAc...) asparagine glycosylation occurs at asparagine 2197. Disordered regions lie at residues 2200-2235 (VTHL…GSEN) and 2274-2494 (TTII…QQTT). A compositionally biased stretch (low complexity) spans 2204-2233 (PSSSSKPVDIPSSDVVTSTNDNSLTSLTGS). A glycan (N-linked (GlcNAc...) asparagine) is linked at asparagine 2281. Over residues 2282–2296 (GSGKSKSGELSSTGS) the composition is skewed to low complexity. Polar residues-rich tracts occupy residues 2329 to 2420 (STET…SATA) and 2429 to 2452 (NGAT…TTNI). Residues asparagine 2444 and asparagine 2466 are each glycosylated (N-linked (GlcNAc...) asparagine). Composition is skewed to low complexity over residues 2453-2471 (QGGN…TGEP) and 2482-2494 (SISQ…QQTT). Aspartate 2507 carries GPI-anchor amidated aspartate lipidation. Positions 2508–2530 (GSGSIVQHSGWLYVLLTAISIFF) are cleaved as a propeptide — removed in mature form.

Belongs to the ALS family. N-glycosylated and O-glycosylated. Post-translationally, the GPI-anchor is attached to the protein in the endoplasmic reticulum and serves to target the protein to the cell surface. There, the glucosamine-inositol phospholipid moiety is cleaved off and the GPI-modified mannoprotein is covalently attached via its lipidless GPI glycan remnant to the 1,6-beta-glucan of the outer cell wall layer.

It is found in the cell membrane. It localises to the secreted. The protein localises to the cell wall. In terms of biological role, cell surface adhesion protein which mediates both yeast-to-host tissue adherence and yeast aggregation. Plays an important role in the pathogenesis of C.albicans infections. This is Agglutinin-like protein 2 (ALS2) from Candida albicans (strain SC5314 / ATCC MYA-2876) (Yeast).